We begin with the raw amino-acid sequence, 1209 residues long: Phospholipid-transporting ATPase ID (1209 aa).

Over residues 1-12 the composition is skewed to basic and acidic residues; the sequence is MTVPKEMPEKWA. The interval 1–36 is disordered; sequence MTVPKEMPEKWARAQAPPSWSRKKPSWGTEEERRAR. The Cytoplasmic segment spans residues 1-64; that stretch reads MTVPKEMPEK…TSKYNILTFL (64 aa). The helical transmembrane segment at 65 to 86 threads the bilayer; the sequence is PVNLFEQFQEVANTYFLFLLIL. At 87 to 92 the chain is on the exoplasmic loop side; it reads QLIPQI. Residues 93-112 form a helical membrane-spanning segment; the sequence is SSLSWFTTIVPLVLVLTITA. Topologically, residues 113-295 are cytoplasmic; sequence VKDATDDYFR…TSIDRLMNTL (183 aa). Residues 296–317 traverse the membrane as a helical segment; it reads VLWIFGFLVCMGVILAIGNAIW. Over 318-346 the chain is Exoplasmic loop; that stretch reads EHEVGMRFQVYLPWDEAVDSAFFSGFLSF. The helical transmembrane segment at 347–368 threads the bilayer; sequence WSYIIILNTVVPISLYVSVEVI. At 369–889 the chain is on the cytoplasmic side; that stretch reads RLGHSYFINW…GRWSYLRMCK (521 aa). The 4-aspartylphosphate intermediate role is filled by aspartate 411. 12 residues coordinate ATP: aspartate 411, lysine 412, threonine 413, glutamate 515, phenylalanine 556, lysine 579, arginine 613, threonine 693, glycine 694, aspartate 695, arginine 807, and lysine 813. Aspartate 411 is a Mg(2+) binding site. Position 413 (threonine 413) interacts with Mg(2+). Residue aspartate 833 coordinates Mg(2+). 2 residues coordinate ATP: asparagine 836 and aspartate 837. Mg(2+) is bound at residue aspartate 837. Residues 890 to 910 form a helical membrane-spanning segment; it reads FLCYFFYKNFAFTMVHFWFGF. Residues 911-922 are Exoplasmic loop-facing; it reads FCGFSAQTVYDQ. Residues 923–942 form a helical membrane-spanning segment; the sequence is YFITLYNIVYTSLPVLAMGV. Topologically, residues 943–972 are cytoplasmic; sequence FDQDVPEQRSMEYPKLYEPGQLNLLFNKRE. Residues 973–994 traverse the membrane as a helical segment; it reads FFICIAQGIYTSVLMFFIPYGV. Topologically, residues 995–1008 are exoplasmic loop; the sequence is FADATRDDGTQLAD. The chain crosses the membrane as a helical span at residues 1009-1031; sequence YQSFAVTVATSLVIVVSVQIGLD. At 1032–1037 the chain is on the cytoplasmic side; sequence TGYWTA. A helical membrane pass occupies residues 1038-1058; the sequence is INHFFIWGSLAVYFAILFAMH. The Exoplasmic loop segment spans residues 1059-1078; the sequence is SNGLFDMFPNQFRFVGNAQN. Residues 1079-1103 form a helical membrane-spanning segment; it reads TLAQPTVWLTIVLTTVVCIMPVVAF. The Cytoplasmic segment spans residues 1104–1209; it reads RFLRLNLKPD…SGGADKPLKG (106 aa). Position 1175 is a phosphoserine (serine 1175). The segment at 1181-1209 is disordered; that stretch reads SSSWIESLRRKKSDSASSPSGGADKPLKG. A compositionally biased stretch (low complexity) spans 1195–1209; that stretch reads SASSPSGGADKPLKG.

Belongs to the cation transport ATPase (P-type) (TC 3.A.3) family. Type IV subfamily. In terms of assembly, component of a P4-ATPase flippase complex which consists of a catalytic alpha subunit ATP8B2 and an accessory beta subunit TMEM30A or TMEM30B. It depends on Mg(2+) as a cofactor. In terms of tissue distribution, isoform 3 is ubiquitous, with highest expression in aorta, cerebellum and uterus.

The protein localises to the cell membrane. It is found in the endoplasmic reticulum membrane. The enzyme catalyses ATP + H2O + phospholipidSide 1 = ADP + phosphate + phospholipidSide 2.. It carries out the reaction a 1,2-diacyl-sn-glycero-3-phosphocholine(out) + ATP + H2O = a 1,2-diacyl-sn-glycero-3-phosphocholine(in) + ADP + phosphate + H(+). Catalytic component of P4-ATPase flippase complex, which catalyzes the hydrolysis of ATP coupled to the transport of phosphatidylcholine (PC) from the outer to the inner leaflet of the plasma membrane. May contribute to the maintenance of membrane lipid asymmetry. The chain is Phospholipid-transporting ATPase ID from Homo sapiens (Human).